The primary structure comprises 265 residues: ClpXP adapter protein SpxH (265 aa).

The protein belongs to the SpxH family. Interacts with Spx.

Its subcellular location is the cytoplasm. In terms of biological role, adapter protein required for efficient degradation of Spx by ClpXP under non-stress conditions. Interaction with Spx stabilizes Spx and exposes the C-terminus of Spx for recognition and proteolysis by ClpXP. The chain is ClpXP adapter protein SpxH from Staphylococcus epidermidis (strain ATCC 35984 / DSM 28319 / BCRC 17069 / CCUG 31568 / BM 3577 / RP62A).